A 326-amino-acid polypeptide reads, in one-letter code: MSFLSGFFGPICEIEVVLNDADTRKVSEIKTEEGKVEKHFLFYDGESVAGKVNIVFRQPGKRLEHQGIRIEFVGQIELFNDKSNTHEFVNLVKELALPGELTQSRNYDFEFMQVEKPYESYIGANVRLRYFLKVTIVRRLTDLVKEYDLIVHQLATYPDVNNSIKMEVGIEDCLHIEFEYNKSKYHLKDVIVGKIYFLLVRIKIQHMELQLIKKEITGIGPSTTTETETVAKYEIMDGAPVKGESIPIRLFLAGYDPTPTMRDVNKKFSVRYFLNLVLVDEEDRRYFKQQEIILWRKAPEKIRKRTNFHQRFEPQEPQASAEEPEI.

This sequence belongs to the VPS26 family. In terms of assembly, component of the heterotrimeric retromer cargo-selective complex (CSC) which is believed to associate with variable sorting nexins to form functionally distinct retromer complex variants.

It localises to the cytoplasm. The protein localises to the endosome membrane. It is found in the early endosome. In terms of biological role, acts as a component of the retromer cargo-selective complex (CSC). The CSC is believed to be the core functional component of retromer or respective retromer complex variants acting to prevent missorting of selected transmembrane cargo proteins into the lysosomal degradation pathway. Retromer mediates retrograde transport of cargo proteins from endosomes to the trans-Golgi network (TGN). The polypeptide is Vacuolar protein sorting-associated protein 26A (vps26a) (Xenopus tropicalis (Western clawed frog)).